Consider the following 77-residue polypeptide: ATP synthase subunit c (77 aa).

The next 2 membrane-spanning stretches (helical) occupy residues 7-27 and 57-77; these read AFKYLAASIAAGLAALAAALG and VGLIEAVPILAIVVAFLILFL.

Belongs to the ATPase C chain family. F-type ATPases have 2 components, F(1) - the catalytic core - and F(0) - the membrane proton channel. F(1) has five subunits: alpha(3), beta(3), gamma(1), delta(1), epsilon(1). F(0) has three main subunits: a(1), b(2) and c(10-14). The alpha and beta chains form an alternating ring which encloses part of the gamma chain. F(1) is attached to F(0) by a central stalk formed by the gamma and epsilon chains, while a peripheral stalk is formed by the delta and b chains.

It localises to the cell membrane. F(1)F(0) ATP synthase produces ATP from ADP in the presence of a proton or sodium gradient. F-type ATPases consist of two structural domains, F(1) containing the extramembraneous catalytic core and F(0) containing the membrane proton channel, linked together by a central stalk and a peripheral stalk. During catalysis, ATP synthesis in the catalytic domain of F(1) is coupled via a rotary mechanism of the central stalk subunits to proton translocation. Its function is as follows. Key component of the F(0) channel; it plays a direct role in translocation across the membrane. A homomeric c-ring of between 10-14 subunits forms the central stalk rotor element with the F(1) delta and epsilon subunits. In Lactobacillus helveticus (strain DPC 4571), this protein is ATP synthase subunit c.